A 798-amino-acid chain; its full sequence is Cation channel sperm-associated auxiliary subunit delta (798 aa).

An N-terminal signal peptide occupies residues 1–20 (MLMLMLVAAVTMWLRPLVTA). Residues 21-723 (QLCRSRTVRT…AFPVQLVSAG (703 aa)) are Extracellular-facing. 7 cysteine pairs are disulfide-bonded: Cys23–Cys369, Cys59–Cys145, Cys144–Cys152, Cys387–Cys496, Cys510–Cys701, Cys525–Cys572, and Cys624–Cys652. N-linked (GlcNAc...) asparagine glycosylation is present at Asn123. N-linked (GlcNAc...) asparagine glycans are attached at residues Asn230, Asn240, Asn472, Asn538, and Asn630. Residues 724–745 (VVILLIISSILGSVWLAYKTPK) form a helical membrane-spanning segment. Topologically, residues 746–798 (LLRTARGRRIKKCATQLCRRCKTVCQFRASATARAGTEPPGRHRTPHGGRSDH) are cytoplasmic.

This sequence belongs to the CATSPERD family. Component of the CatSper complex or CatSpermasome composed of the core pore-forming members CATSPER1, CATSPER2, CATSPER3 and CATSPER4 as well as auxiliary members CATSPERB, CATSPERG, CATSPERD, CATSPERE, CATSPERZ, C2CD6/CATSPERT, TMEM249, TMEM262 and EFCAB9. HSPA1 may be an additional auxiliary complex member. The core complex members CATSPER1, CATSPER2, CATSPER3 and CATSPER4 form a heterotetrameric channel. The auxiliary CATSPERB, CATSPERG, CATSPERD and CATSPERE subunits form a pavilion-like structure over the pore which stabilizes the complex through interactions with CATSPER4, CATSPER3, CATSPER1 and CATSPER2 respectively. TMEM262/CATSPERH interacts with CATSPERB, further stabilizing the complex. C2CD6/CATSPERT interacts at least with CATSPERD and is required for targeting the CatSper complex in the flagellar membrane.

It is found in the cell projection. The protein localises to the cilium. Its subcellular location is the flagellum membrane. In terms of biological role, auxiliary component of the CatSper complex, a complex involved in sperm cell hyperactivation. Sperm cell hyperactivation is needed for sperm motility which is essential late in the preparation of sperm for fertilization. Required for CATSPER1 stability before intraflagellar transport and/or incorporation of the CatSper complex channel into the flagellar membrane. This chain is Cation channel sperm-associated auxiliary subunit delta, found in Homo sapiens (Human).